A 541-amino-acid chain; its full sequence is Atlastin-3 (541 aa).

Positions 1-25 (MLSPQRVAAAASRGADDAMESSKPG) are N-terminal hypervariable region (HVR). Residues 1–445 (MLSPQRVAAA…NVFSTFRTPA (445 aa)) are Cytoplasmic-facing. Residues 57-305 (DLDVVVVSVA…LIPYVLNPSK (249 aa)) form the GB1/RHD3-type G domain. Residues Arg-70, Lys-71, Gly-72, Lys-73, Ser-74, Phe-75, and Arg-109 each coordinate GDP. Residue Asp-142 coordinates Mg(2+). Residues Arg-213, Asp-214, Val-272, and Ser-275 each coordinate GDP. Residues 343-434 (MLQATAEANN…YENFCKHNGS (92 aa)) are 3HB (three-helix bundle) domain. Residue Lys-391 is modified to N6-acetyllysine. A helical membrane pass occupies residues 446–466 (VLFTGIVALYIASGLTGFIGL). Glu-467 is a topological domain (lumenal). The helical transmembrane segment at 468–488 (VVAQLFNCMVGLLLIALLTWG) threads the bilayer. Over 489 to 541 (YIRYSGQYRELGGAIDFGAAYVLEQASSHIGNSTQATVRDAVVGRPSMDKKAQ) the chain is Cytoplasmic. The residue at position 535 (Ser-535) is a Phosphoserine.

The protein belongs to the TRAFAC class dynamin-like GTPase superfamily. GB1/RHD3 GTPase family. GB1 subfamily. Monomeric and homodimeric. The homodimer, transiently formed by two molecules on opposing membranes, is the active form mediating ER membrane fusion. Interacts with ZFYVE27; both proteins are involved in endoplasmic reticulum tubular network organization. Interacts with REEP5; both proteins are involved in endoplasmic reticulum tubular network organization. As to expression, expressed in the central nervous system and in dorsal root ganglia neurons. Expressed in peripheral tissues (at protein level).

It is found in the endoplasmic reticulum membrane. The enzyme catalyses GTP + H2O = GDP + phosphate + H(+). Functionally, atlastin-3 (ATL3) is a membrane-anchored GTPase that mediates the GTP-dependent fusion of endoplasmic reticulum (ER) membranes, maintaining the continuous ER network. It facilitates the formation of three-way junctions where ER tubules intersect. Two atlastin-3 on neighboring ER tubules bind GTP and form loose homodimers through the GB1/RHD3-type G domains and 3HB regions. Upon GTP hydrolysis, the 3HB regions tighten, pulling the membranes together to drive their fusion. After fusion, the homodimer disassembles upon release of inorganic phosphate (Pi). Subsequently, GDP dissociates, resetting the monomers to a conformation ready for a new fusion cycle. This Homo sapiens (Human) protein is Atlastin-3.